The following is a 438-amino-acid chain: Transmembrane protein 184C (438 aa).

The next 7 membrane-spanning stretches (helical) occupy residues 17-37 (LVAV…VWEL), 48-68 (AWFI…WVIL), 86-106 (ILWM…YPGI), 179-199 (YTVV…LGIY), 212-232 (YLVI…LLFY), 254-274 (VVFV…VGVI), and 287-307 (AVAT…AAIA). Residues 358–438 (PRKKLFPEDQ…KEPSDKSVDS (81 aa)) form a disordered region. Composition is skewed to low complexity over residues 374–390 (SLLS…ASSM) and 404–413 (TVTPQTTPTT). At S422 the chain carries Phosphoserine. Residues 425–438 (IGEKKEPSDKSVDS) are compositionally biased toward basic and acidic residues.

Belongs to the TMEM184 family.

It is found in the membrane. Possible tumor suppressor which may play a role in cell growth. In Pongo abelii (Sumatran orangutan), this protein is Transmembrane protein 184C (TMEM184C).